A 208-amino-acid polypeptide reads, in one-letter code: MDDNKISLATTRRLPLYYRCLSELNEKGEDKVSSAVLERLLKIDAATVRRDFSYFGQMGRRGYGYDVKILLELFNDVLKQDTAANVAIVGVGNLGHALINFKFHKTGNARIKMAFDVNPEVVGTIQSEVPVYDINEIKQRVRDEKIEVAILTVPNSQAQRVTDLLVEAGIKGIMNFTTEIIDVPYNVTIHDVDLSLELQALIYSMDQD.

Residues 16-55 (LYYRCLSELNEKGEDKVSSAVLERLLKIDAATVRRDFSYF) constitute a DNA-binding region (H-T-H motif). Residue 90–95 (GVGNLG) participates in NAD(+) binding.

It belongs to the transcriptional regulatory Rex family. In terms of assembly, homodimer.

The protein localises to the cytoplasm. Modulates transcription in response to changes in cellular NADH/NAD(+) redox state. The sequence is that of Redox-sensing transcriptional repressor Rex from Pediococcus pentosaceus (strain ATCC 25745 / CCUG 21536 / LMG 10740 / 183-1w).